Reading from the N-terminus, the 398-residue chain is Probable pectate lyase P56 (398 aa).

Positions 1 to 27 are cleaved as a signal peptide; that stretch reads MEYSYRTKINVLFIVLILFVFAALGTA. A glycan (N-linked (GlcNAc...) asparagine) is linked at Asn135. Ca(2+) contacts are provided by Asp192, Asp217, and Asp221. N-linked (GlcNAc...) asparagine glycosylation occurs at Asn228. Arg273 is an active-site residue.

The protein belongs to the polysaccharide lyase 1 family. It depends on Ca(2+) as a cofactor. In terms of tissue distribution, expressed in anthers and pollen.

The enzyme catalyses Eliminative cleavage of (1-&gt;4)-alpha-D-galacturonan to give oligosaccharides with 4-deoxy-alpha-D-galact-4-enuronosyl groups at their non-reducing ends.. It functions in the pathway glycan metabolism; pectin degradation; 2-dehydro-3-deoxy-D-gluconate from pectin: step 2/5. Functionally, might be needed during pollen development and tube growth. This Solanum lycopersicum (Tomato) protein is Probable pectate lyase P56 (LAT56).